Here is a 130-residue protein sequence, read N- to C-terminus: Small ribosomal subunit protein uS9 (130 aa).

Belongs to the universal ribosomal protein uS9 family.

This chain is Small ribosomal subunit protein uS9, found in Caldicellulosiruptor bescii (strain ATCC BAA-1888 / DSM 6725 / KCTC 15123 / Z-1320) (Anaerocellum thermophilum).